Reading from the N-terminus, the 78-residue chain is Large ribosomal subunit protein bL28 (78 aa).

Belongs to the bacterial ribosomal protein bL28 family.

This is Large ribosomal subunit protein bL28 from Synechococcus sp. (strain CC9605).